A 192-amino-acid polypeptide reads, in one-letter code: Adenylate kinase (192 aa).

10–15 (GSGKGT) is an ATP binding site. The segment at 30–59 (STGDMLREVISRETEVGRKAKAIINAGALV) is NMP. Residues Thr-31, Arg-36, 57-59 (ALV), 85-88 (GYPR), and Gln-92 contribute to the AMP site. Residues 126–142 (KRVQETIAVGGQVRSDD) are LID. Residue Arg-127 participates in ATP binding. 2 residues coordinate AMP: Arg-139 and Arg-150. Residue Met-178 participates in ATP binding.

This sequence belongs to the adenylate kinase family. Monomer.

The protein localises to the cytoplasm. The enzyme catalyses AMP + ATP = 2 ADP. Its pathway is purine metabolism; AMP biosynthesis via salvage pathway; AMP from ADP: step 1/1. Functionally, catalyzes the reversible transfer of the terminal phosphate group between ATP and AMP. Plays an important role in cellular energy homeostasis and in adenine nucleotide metabolism. The protein is Adenylate kinase of Bartonella quintana (strain Toulouse) (Rochalimaea quintana).